We begin with the raw amino-acid sequence, 210 residues long: Urease accessory protein UreF (210 aa).

Belongs to the UreF family. UreD, UreF and UreG form a complex that acts as a GTP-hydrolysis-dependent molecular chaperone, activating the urease apoprotein by helping to assemble the nickel containing metallocenter of UreC. The UreE protein probably delivers the nickel.

The protein resides in the cytoplasm. Its function is as follows. Required for maturation of urease via the functional incorporation of the urease nickel metallocenter. The sequence is that of Urease accessory protein UreF from Cereibacter sphaeroides (strain KD131 / KCTC 12085) (Rhodobacter sphaeroides).